A 152-amino-acid chain; its full sequence is Deoxyuridine 5'-triphosphate nucleotidohydrolase (152 aa).

Substrate-binding positions include 71–73, Asn-84, 88–90, and Met-98; these read RSG and LID.

This sequence belongs to the dUTPase family. The cofactor is Mg(2+).

The catalysed reaction is dUTP + H2O = dUMP + diphosphate + H(+). Its pathway is pyrimidine metabolism; dUMP biosynthesis; dUMP from dCTP (dUTP route): step 2/2. This enzyme is involved in nucleotide metabolism: it produces dUMP, the immediate precursor of thymidine nucleotides and it decreases the intracellular concentration of dUTP so that uracil cannot be incorporated into DNA. In Cronobacter sakazakii (strain ATCC BAA-894) (Enterobacter sakazakii), this protein is Deoxyuridine 5'-triphosphate nucleotidohydrolase.